Reading from the N-terminus, the 98-residue chain is NADH-ubiquinone oxidoreductase chain 4L (98 aa).

Transmembrane regions (helical) follow at residues 2-22, 29-49, and 61-81; these read PSIS…MLMF, SLLC…LIIL, and ILLL…LVMV.

The protein belongs to the complex I subunit 4L family. As to quaternary structure, core subunit of respiratory chain NADH dehydrogenase (Complex I) which is composed of 45 different subunits.

Its subcellular location is the mitochondrion inner membrane. The catalysed reaction is a ubiquinone + NADH + 5 H(+)(in) = a ubiquinol + NAD(+) + 4 H(+)(out). Its function is as follows. Core subunit of the mitochondrial membrane respiratory chain NADH dehydrogenase (Complex I) which catalyzes electron transfer from NADH through the respiratory chain, using ubiquinone as an electron acceptor. Part of the enzyme membrane arm which is embedded in the lipid bilayer and involved in proton translocation. The sequence is that of NADH-ubiquinone oxidoreductase chain 4L (MT-ND4L) from Microcebus griseorufus (Gray-brown mouse lemur).